A 31-amino-acid chain; its full sequence is PTEN upstream open reading frame MP31 (31 aa).

As to quaternary structure, interacts with lactate dehydrogenases LDHA and LDHB; interaction with mitochondrial LDH leads to inhibition of lactate dehydrogenase activity, preventing conversion of lactate to pyruvate. As to expression, expressed in brain (at protein level). Expressed at lower levels in glioblastomas than in normal brain tissue (at protein level).

The protein resides in the mitochondrion. Its function is as follows. Inhibits lactate dehydrogenase (LDH)-mediated conversion of lactate to pyruvate in mitochondria by competing with mitochondrial LDH for binding to NAD(+). Also inhibits cellular lactate utilization. This Homo sapiens (Human) protein is PTEN upstream open reading frame MP31.